The sequence spans 150 residues: Large ribosomal subunit protein uL15 (150 aa).

A disordered region spans residues 1–57 (MSLTLQSLKPQKGARRRKMRKGRGIAAGQGASCGFGMRGQKSRSGRPTRPGFEGGQM). Over residues 12–23 (KGARRRKMRKGR) the composition is skewed to basic residues. Positions 25 to 37 (IAAGQGASCGFGM) are enriched in gly residues.

The protein belongs to the universal ribosomal protein uL15 family. In terms of assembly, part of the 50S ribosomal subunit.

Its function is as follows. Binds to the 23S rRNA. The sequence is that of Large ribosomal subunit protein uL15 from Synechococcus sp. (strain RCC307).